A 255-amino-acid polypeptide reads, in one-letter code: Menaquinone reductase, iron-sulfur cluster-binding subunit (255 aa).

3 consecutive 4Fe-4S ferredoxin-type domains span residues tryptophan 11–aspartate 41, histidine 66–glutamate 97, and glycine 99–phenylalanine 128. [4Fe-4S] cluster contacts are provided by cysteine 20, cysteine 23, cysteine 26, cysteine 30, cysteine 75, cysteine 78, cysteine 83, cysteine 87, cysteine 108, cysteine 111, cysteine 114, and cysteine 118. [3Fe-4S] cluster contacts are provided by cysteine 155, cysteine 158, cysteine 188, and cysteine 192.

In terms of assembly, the Qrc complex is composed of four subunits: QrcA, QrcB, QrcC and QrcD. Can form a supercomplex with the [NiFe] hydrogenase HynA1 and the tetraheme Type I cytochrome c3 TpIc(3), its physiological electron donors. It depends on [4Fe-4S] cluster as a cofactor. Requires [3Fe-4S] cluster as cofactor.

Its subcellular location is the periplasm. Component of the respiratory Qrc complex, that catalyzes the reduction of the menaquinone pool using electrons transferred from the reduced periplasmic cytochrome c3, and which is probably involved in sulfate respiration. Is likely essential for growth on H(2) or formate since the periplasmic hydrogenases and/or formate dehydrogenases act as primary electron donors for the Qrc complex. QrcC is an electron-transferring subunit; its cubane iron sulfur clusters form a pathway for electron transfer between the hemes of QrcA and the membrane quinone pool. This Nitratidesulfovibrio vulgaris (strain ATCC 29579 / DSM 644 / CCUG 34227 / NCIMB 8303 / VKM B-1760 / Hildenborough) (Desulfovibrio vulgaris) protein is Menaquinone reductase, iron-sulfur cluster-binding subunit.